Reading from the N-terminus, the 1637-residue chain is Probable serine/threonine-protein kinase gdt2 (1637 aa).

The N-terminal stretch at 1-19 (MNYILYILLILIIFSINNT) is a signal peptide. At 20 to 896 (FSIGSFVYTP…IPVEKINLLP (877 aa)) the chain is on the extracellular side. The chain crosses the membrane as a helical span at residues 897–917 (IIVPICVTVLVLLSILIVFFG). Residues 918–1637 (ARYYKHKKRR…NNNNNNNNNN (720 aa)) are Cytoplasmic-facing. A compositionally biased stretch (polar residues) spans 977 to 990 (SDIQTQSENNNLEP). Residues 977–1000 (SDIQTQSENNNLEPTTVETTTTTT) are disordered. The span at 991-1000 (TTVETTTTTT) shows a compositional bias: low complexity. Positions 1290–1547 (IIIKNYISEG…LSKYLKHLLK (258 aa)) constitute a Protein kinase domain. ATP-binding positions include 1296–1304 (ISEGTFGIV) and Lys1317. The active-site Proton acceptor is the Asp1408. The disordered stretch occupies residues 1557–1637 (DKDKKNKKKN…NNNNNNNNNN (81 aa)). 2 stretches are compositionally biased toward low complexity: residues 1568–1589 (NNNNNNNNNNNNNNNNNNNNNN) and 1597–1637 (NNNI…NNNN).

In the N-terminal section; belongs to the GDT family. This sequence in the C-terminal section; belongs to the protein kinase superfamily. TKL Ser/Thr protein kinase family.

It is found in the membrane. The enzyme catalyses L-seryl-[protein] + ATP = O-phospho-L-seryl-[protein] + ADP + H(+). It catalyses the reaction L-threonyl-[protein] + ATP = O-phospho-L-threonyl-[protein] + ADP + H(+). Functionally, regulates the transition between growth and differentiation. The sequence is that of Probable serine/threonine-protein kinase gdt2 (gdt2) from Dictyostelium discoideum (Social amoeba).